The chain runs to 1475 residues: Protein STU1 (1475 aa).

Disordered regions lie at residues 870 to 913 (REST…EPDL) and 1113 to 1134 (DGESIEDTSGNTSHGTDENRPA). Residues 887 to 896 (DGAHGGDARD) are compositionally biased toward basic and acidic residues.

It belongs to the CLASP family. Interacts with microtubules.

Its subcellular location is the cytoplasm. The protein localises to the cytoskeleton. The protein resides in the nucleus. It localises to the spindle. Microtubule binding protein that promotes the stabilization of dynamic microtubules. Required for mitotic spindle formation. The sequence is that of Protein STU1 (STU1) from Eremothecium gossypii (strain ATCC 10895 / CBS 109.51 / FGSC 9923 / NRRL Y-1056) (Yeast).